Reading from the N-terminus, the 62-residue chain is Large ribosomal subunit protein uL30 (62 aa).

It belongs to the universal ribosomal protein uL30 family. In terms of assembly, part of the 50S ribosomal subunit.

This chain is Large ribosomal subunit protein uL30, found in Alkalilimnicola ehrlichii (strain ATCC BAA-1101 / DSM 17681 / MLHE-1).